A 533-amino-acid polypeptide reads, in one-letter code: Tyrosine-protein kinase transforming protein Fps (533 aa).

A disordered region spans residues 1-46 (ASGQLHRPQPQEHTSTSAAAGTWRHTQASESRHRLPHCSAAPSHQD). The span at 11 to 29 (QEHTSTSAAAGTWRHTQAS) shows a compositional bias: polar residues. Residues 50-124 (MGFGPELWCP…LQEDRQSVCS (75 aa)) form the F-BAR; degenerate domain. One can recognise an SH2 domain in the interval 171-260 (WYHGAIPRSE…KSGIVLTRAV (90 aa)). Residues 272-525 (VLLGERIGRG…PSFGAVHQDL (254 aa)) enclose the Protein kinase domain. ATP is bound by residues 278 to 286 (IGRGNFGEV) and K301. D394 (proton acceptor) is an active-site residue. Y424 carries the phosphotyrosine; by autocatalysis modification.

It belongs to the protein kinase superfamily. Tyr protein kinase family. Fes/fps subfamily.

The catalysed reaction is L-tyrosyl-[protein] + ATP = O-phospho-L-tyrosyl-[protein] + ADP + H(+). This is Tyrosine-protein kinase transforming protein Fps (V-FPS) from Gallus gallus (Chicken).